Reading from the N-terminus, the 368-residue chain is DNA replication and repair protein RecF (368 aa).

An ATP-binding site is contributed by 30–37 (GNNAQGKT).

Belongs to the RecF family.

It is found in the cytoplasm. Functionally, the RecF protein is involved in DNA metabolism; it is required for DNA replication and normal SOS inducibility. RecF binds preferentially to single-stranded, linear DNA. It also seems to bind ATP. The protein is DNA replication and repair protein RecF of Streptococcus pyogenes serotype M49 (strain NZ131).